The sequence spans 151 residues: Large ribosomal subunit protein uL15 (151 aa).

Residues 1–45 (MNLSSLKPVKGSTKTCKRVGRGQGSGCGGTSTRGHKGQKSRSGYS) form a disordered region. Gly residues predominate over residues 21–31 (RGQGSGCGGTS).

It belongs to the universal ribosomal protein uL15 family. Part of the 50S ribosomal subunit.

Its function is as follows. Binds to the 23S rRNA. This chain is Large ribosomal subunit protein uL15, found in Azobacteroides pseudotrichonymphae genomovar. CFP2.